Here is a 340-residue protein sequence, read N- to C-terminus: MKNILDLKYEELVNEFQRIGLEKYRVDQVLNWIYKKKVFEFEKMTNLSKEHRKLLSEKFFIDLPKLLDMQISKIDKTTKFLWELRDGNTIESVALFHSGRVTACISTQVGCPVKCEFCATGQSGFVRNLTVGEIVSQILAIELNRKIKVGNVVYMGMGEPLLNFENVIDSIKMLNDKKMLNIGIRRITVSTVGIPEKIIALAESGLNVKLALSLHAVTDYKRDQIIPLNKKYSVEELIYSLRKYQEITGNRVTIEYILIREFNDYPEDAIRLVELLRGLSVYVNLIPINPVNPKFHRPNRWALERFKEILEKNGIECEIRKEKGTDIDAACGQLRRRKLR.

The Proton acceptor role is filled by glutamate 91. Residues 97 to 326 enclose the Radical SAM core domain; it reads HSGRVTACIS…CEIRKEKGTD (230 aa). Cysteines 104 and 331 form a disulfide. 3 residues coordinate [4Fe-4S] cluster: cysteine 111, cysteine 115, and cysteine 118. S-adenosyl-L-methionine-binding positions include 158–159, serine 190, 213–215, and asparagine 289; these read GE and SLH. The S-methylcysteine intermediate role is filled by cysteine 331.

Belongs to the radical SAM superfamily. RlmN family. [4Fe-4S] cluster is required as a cofactor.

Its subcellular location is the cytoplasm. The catalysed reaction is adenosine(2503) in 23S rRNA + 2 reduced [2Fe-2S]-[ferredoxin] + 2 S-adenosyl-L-methionine = 2-methyladenosine(2503) in 23S rRNA + 5'-deoxyadenosine + L-methionine + 2 oxidized [2Fe-2S]-[ferredoxin] + S-adenosyl-L-homocysteine. It carries out the reaction adenosine(37) in tRNA + 2 reduced [2Fe-2S]-[ferredoxin] + 2 S-adenosyl-L-methionine = 2-methyladenosine(37) in tRNA + 5'-deoxyadenosine + L-methionine + 2 oxidized [2Fe-2S]-[ferredoxin] + S-adenosyl-L-homocysteine. Its function is as follows. Specifically methylates position 2 of adenine 2503 in 23S rRNA and position 2 of adenine 37 in tRNAs. The polypeptide is Probable dual-specificity RNA methyltransferase RlmN (Thermosipho melanesiensis (strain DSM 12029 / CIP 104789 / BI429)).